The chain runs to 413 residues: Falstatin (413 aa).

The signal sequence occupies residues 1 to 21 (MNLLVFFCFFLLSCIVHLSRC). The BC loop; binds and inhibits the active site cavity of cysteine proteases signature appears at 284 to 294 (LDSVNGNGFVW). Polar residues-rich tracts occupy residues 325 to 339 (ISVT…NSNT) and 346 to 360 (NNKQ…TTNH). The interval 325–367 (ISVTNPVPIPKNSNTNKDDSINNKQDGSQNNTTTNHFPKPREQ) is disordered.

It belongs to the protease inhibitor I71 family. As to quaternary structure, oligomer; probably composed of 10 monomers. Proteolytically cleaved.

The protein resides in the secreted. Its subcellular location is the cytoplasmic vesicle. It localises to the secretory vesicle. It is found in the microneme. The protein localises to the parasitophorous vacuole lumen. The protein resides in the host cytoplasm. Cysteine protease inhibitor. Inhibits cysteine protease falcipains FP2 and FP3. Required for the invasion of host erythrocytes by merozoites. In the mosquito vector, essential for the gliding motility of hemocoel sporozoites and, therefore, for salivary gland invasion and the subsequent transmission from the mosquito to the mammalian host. Required for the invasion of host hepatocytes. During the liver stage, may prevent host hepatocyte cell death likely by inhibiting host cysteine proteases. In Plasmodium falciparum (isolate 3D7), this protein is Falstatin.